The chain runs to 54 residues: Metallothionein-4 (54 aa).

It belongs to the metallothionein superfamily. Type 11 family.

In Yarrowia lipolytica (strain CLIB 122 / E 150) (Yeast), this protein is Metallothionein-4 (MTP4).